Reading from the N-terminus, the 454-residue chain is tRNA modification GTPase MnmE (454 aa).

(6S)-5-formyl-5,6,7,8-tetrahydrofolate contacts are provided by arginine 23, glutamate 80, and lysine 120. Residues 216–377 enclose the TrmE-type G domain; that stretch reads GMKVVIAGRP…LRNHLKQSMG (162 aa). Asparagine 226 provides a ligand contact to K(+). Residues 226–231, 245–251, 270–273, 335–338, and 358–360 each bind GTP; these read NAGKSS, TDIAGTT, DTAG, NKAD, and SAR. Serine 230 provides a ligand contact to Mg(2+). K(+)-binding residues include threonine 245, isoleucine 247, and threonine 250. A Mg(2+)-binding site is contributed by threonine 251. Residue lysine 454 coordinates (6S)-5-formyl-5,6,7,8-tetrahydrofolate.

Belongs to the TRAFAC class TrmE-Era-EngA-EngB-Septin-like GTPase superfamily. TrmE GTPase family. Homodimer. Heterotetramer of two MnmE and two MnmG subunits. The cofactor is K(+).

It is found in the cytoplasm. Exhibits a very high intrinsic GTPase hydrolysis rate. Involved in the addition of a carboxymethylaminomethyl (cmnm) group at the wobble position (U34) of certain tRNAs, forming tRNA-cmnm(5)s(2)U34. The sequence is that of tRNA modification GTPase MnmE from Escherichia coli O139:H28 (strain E24377A / ETEC).